We begin with the raw amino-acid sequence, 65 residues long: UPF0434 protein bsr0601 (65 aa).

It belongs to the UPF0434 family.

This chain is UPF0434 protein bsr0601, found in Bradyrhizobium diazoefficiens (strain JCM 10833 / BCRC 13528 / IAM 13628 / NBRC 14792 / USDA 110).